Here is a 323-residue protein sequence, read N- to C-terminus: Trihelix transcription factor GT-3a (323 aa).

Residues 1-20 (MDRRNPFQHHHHHHQLHHHL) are compositionally biased toward basic residues. A disordered region spans residues 1–51 (MDRRNPFQHHHHHHQLHHHLIQQQQLPPPPLSTTATMDPGGGGGGGERIPQ). The 57-residue stretch at 52-108 (WSIEETKELLAIREELDQTFMETKRNKLLWEVVAAKMADKGFVRSAEQCKSKWKNLV) folds into the Myb-like domain. Disordered stretches follow at residues 147 to 176 (EATE…EPNQ), 190 to 220 (KRET…GTKA), and 269 to 297 (ELEE…ARAQ). Over residues 164-176 (SDDEEEEVDEPNQ) the composition is skewed to acidic residues.

In terms of assembly, homodimer. Heterodimer with GT-3B. Predominantly expressed in roots and flower buds.

The protein resides in the nucleus. Functionally, probable transcription factor that binds specifically to the core DNA sequence 5'-GTTAC-3'. This chain is Trihelix transcription factor GT-3a (GT-3A), found in Arabidopsis thaliana (Mouse-ear cress).